The primary structure comprises 79 residues: Biotin synthase auxiliary protein (79 aa).

Belongs to the BsaP family. The cofactor is iron-sulfur cluster.

Functionally, required for the activity of the biotin synthase BioB. This Mycobacterium bovis (strain ATCC BAA-935 / AF2122/97) protein is Biotin synthase auxiliary protein.